The sequence spans 338 residues: Pyridoxal 5'-phosphate synthase subunit PdxS (338 aa).

Residue D66 participates in D-ribose 5-phosphate binding. Residue K123 is the Schiff-base intermediate with D-ribose 5-phosphate of the active site. D-ribose 5-phosphate is bound at residue G195. K207 provides a ligand contact to D-glyceraldehyde 3-phosphate. D-ribose 5-phosphate-binding positions include G256 and G277–S278.

It belongs to the PdxS/SNZ family. In the presence of PdxT, forms a dodecamer of heterodimers.

It catalyses the reaction aldehydo-D-ribose 5-phosphate + D-glyceraldehyde 3-phosphate + L-glutamine = pyridoxal 5'-phosphate + L-glutamate + phosphate + 3 H2O + H(+). The protein operates within cofactor biosynthesis; pyridoxal 5'-phosphate biosynthesis. Its function is as follows. Catalyzes the formation of pyridoxal 5'-phosphate from ribose 5-phosphate (RBP), glyceraldehyde 3-phosphate (G3P) and ammonia. The ammonia is provided by the PdxT subunit. Can also use ribulose 5-phosphate and dihydroxyacetone phosphate as substrates, resulting from enzyme-catalyzed isomerization of RBP and G3P, respectively. This is Pyridoxal 5'-phosphate synthase subunit PdxS from Saccharolobus islandicus (strain L.S.2.15 / Lassen #1) (Sulfolobus islandicus).